The following is a 238-amino-acid chain: Proteasome subunit beta type-6 (238 aa).

An N-acetylalanine modification is found at Ala2. Residues 2 to 33 (AAALAVRGAVSAPAFGPEALTPDWENREVSTG) constitute a propeptide, removed in mature form. Residue Thr34 is the Nucleophile of the active site. Thr68 carries the phosphothreonine modification.

It belongs to the peptidase T1B family. As to quaternary structure, the 26S proteasome consists of a 20S proteasome core and two 19S regulatory subunits. The 20S proteasome core is a barrel-shaped complex made of 28 subunits that are arranged in four stacked rings. The two outer rings are each formed by seven alpha subunits, and the two inner rings are formed by seven beta subunits. The proteolytic activity is exerted by three beta-subunits PSMB5, PSMB6 and PSMB7.

The protein localises to the cytoplasm. It is found in the nucleus. The catalysed reaction is Cleavage of peptide bonds with very broad specificity.. Component of the 20S core proteasome complex involved in the proteolytic degradation of most intracellular proteins. This complex plays numerous essential roles within the cell by associating with different regulatory particles. Associated with two 19S regulatory particles, forms the 26S proteasome and thus participates in the ATP-dependent degradation of ubiquitinated proteins. The 26S proteasome plays a key role in the maintenance of protein homeostasis by removing misfolded or damaged proteins that could impair cellular functions, and by removing proteins whose functions are no longer required. Associated with the PA200 or PA28, the 20S proteasome mediates ubiquitin-independent protein degradation. This type of proteolysis is required in several pathways including spermatogenesis (20S-PA200 complex) or generation of a subset of MHC class I-presented antigenic peptides (20S-PA28 complex). Within the 20S core complex, PSMB6 displays a peptidylglutamyl-hydrolyzing activity also termed postacidic or caspase-like activity, meaning that the peptides bond hydrolysis occurs directly after acidic residues. The polypeptide is Proteasome subunit beta type-6 (Psmb6) (Rattus norvegicus (Rat)).